The sequence spans 224 residues: Deoxyribose-phosphate aldolase (224 aa).

Asp98 serves as the catalytic Proton donor/acceptor. Catalysis depends on Lys159, which acts as the Schiff-base intermediate with acetaldehyde. Lys189 serves as the catalytic Proton donor/acceptor.

The protein belongs to the DeoC/FbaB aldolase family. DeoC type 1 subfamily.

It is found in the cytoplasm. The catalysed reaction is 2-deoxy-D-ribose 5-phosphate = D-glyceraldehyde 3-phosphate + acetaldehyde. The protein operates within carbohydrate degradation; 2-deoxy-D-ribose 1-phosphate degradation; D-glyceraldehyde 3-phosphate and acetaldehyde from 2-deoxy-alpha-D-ribose 1-phosphate: step 2/2. Functionally, catalyzes a reversible aldol reaction between acetaldehyde and D-glyceraldehyde 3-phosphate to generate 2-deoxy-D-ribose 5-phosphate. The chain is Deoxyribose-phosphate aldolase from Methanothermobacter thermautotrophicus (strain ATCC 29096 / DSM 1053 / JCM 10044 / NBRC 100330 / Delta H) (Methanobacterium thermoautotrophicum).